The sequence spans 448 residues: Methionine aminopeptidase 2-1 (448 aa).

The segment at 1–83 (MAAQVIPELQ…TQKAQTEPPR (83 aa)) is disordered. The segment covering 32–48 (ENEDGDSEDDNGDDQGA) has biased composition (acidic residues). Over residues 59-73 (AKKKKKKKPKKKKKD) the composition is skewed to basic residues. A substrate-binding site is contributed by His-198. Positions 218, 229, and 298 each coordinate a divalent metal cation. His-306 serves as a coordination point for substrate. Positions 334 and 429 each coordinate a divalent metal cation.

Belongs to the peptidase M24A family. Methionine aminopeptidase eukaryotic type 2 subfamily. It depends on Co(2+) as a cofactor. Zn(2+) is required as a cofactor. The cofactor is Mn(2+). Requires Fe(2+) as cofactor.

It localises to the cytoplasm. The enzyme catalyses Release of N-terminal amino acids, preferentially methionine, from peptides and arylamides.. Functionally, cotranslationally removes the N-terminal methionine from nascent proteins. The N-terminal methionine is often cleaved when the second residue in the primary sequence is small and uncharged (Met-Ala-, Cys, Gly, Pro, Ser, Thr, or Val). The protein is Methionine aminopeptidase 2-1 of Ajellomyces capsulatus (strain G186AR / H82 / ATCC MYA-2454 / RMSCC 2432) (Darling's disease fungus).